The primary structure comprises 323 residues: GDSL esterase/lipase At5g03980 (323 aa).

Positions 1–21 (MSTTKALSLLVFILFVSLVHS) are cleaved as a signal peptide. Ser-36 serves as the catalytic Nucleophile. N-linked (GlcNAc...) asparagine glycosylation occurs at Asn-77. Residues Asp-294 and His-297 contribute to the active site.

It belongs to the 'GDSL' lipolytic enzyme family.

Its subcellular location is the secreted. This chain is GDSL esterase/lipase At5g03980, found in Arabidopsis thaliana (Mouse-ear cress).